Reading from the N-terminus, the 462-residue chain is A-type ATP synthase subunit B (462 aa).

The protein belongs to the ATPase alpha/beta chains family. In terms of assembly, has multiple subunits with at least A(3), B(3), C, D, E, F, H, I and proteolipid K(x).

It is found in the cell membrane. Component of the A-type ATP synthase that produces ATP from ADP in the presence of a proton gradient across the membrane. The B chain is a regulatory subunit. The polypeptide is A-type ATP synthase subunit B (Methanococcus maripaludis (strain C5 / ATCC BAA-1333)).